The sequence spans 230 residues: Aminodeoxyfutalosine nucleosidase (230 aa).

Glu13 (proton acceptor) is an active-site residue. Substrate contacts are provided by residues Gly80, Val154, and 174 to 175 (ME). Asp198 (proton donor) is an active-site residue.

The protein belongs to the PNP/UDP phosphorylase family. MtnN subfamily. As to quaternary structure, homodimer.

The catalysed reaction is 6-amino-6-deoxyfutalosine + H2O = dehypoxanthine futalosine + adenine. The enzyme catalyses S-adenosyl-L-homocysteine + H2O = S-(5-deoxy-D-ribos-5-yl)-L-homocysteine + adenine. It catalyses the reaction S-methyl-5'-thioadenosine + H2O = 5-(methylsulfanyl)-D-ribose + adenine. It carries out the reaction 5'-deoxyadenosine + H2O = 5-deoxy-D-ribose + adenine. It functions in the pathway quinol/quinone metabolism; menaquinone biosynthesis. It participates in amino-acid biosynthesis; L-methionine biosynthesis via salvage pathway; S-methyl-5-thio-alpha-D-ribose 1-phosphate from S-methyl-5'-thioadenosine (hydrolase route): step 1/2. Is inhibited by the transition state analog BuT-DADMe-ImmA. This compound is also able to inhibit H.pylori growth and is more efficient than antibiotics commonly used in ulcer therapy. Its function is as follows. Catalyzes the direct conversion of aminodeoxyfutalosine (AFL) into dehypoxanthine futalosine (DHFL) and adenine via the hydrolysis of the N-glycosidic bond; this reaction seems to represent an essential step in the menaquinone biosynthesis pathway in Helicobacter species. Also catalyzes the hydrolysis of 5'-methylthioadenosine (MTA) to adenine and 5'-methylthioribose. Can also probably use S-adenosylhomocysteine (SAH) as substrate, leading to adenine and S-ribosylhomocysteine. These other activities highlight the tremendous versatility of the enzyme, which also plays key roles in S-adenosylmethionine recycling and in the biosynthesis of the quorum-sensing molecule autoinducer-2. In Helicobacter pylori (strain J99 / ATCC 700824) (Campylobacter pylori J99), this protein is Aminodeoxyfutalosine nucleosidase (mtnN).